Reading from the N-terminus, the 147-residue chain is Lysozyme C-1 (147 aa).

The signal sequence occupies residues Met-1–Gly-18. Residues Lys-19–Leu-147 form the C-type lysozyme domain. 4 disulfide bridges follow: Cys-24–Cys-145, Cys-48–Cys-133, Cys-82–Cys-98, and Cys-94–Cys-112. Catalysis depends on residues Glu-53 and Asp-70.

The protein belongs to the glycosyl hydrolase 22 family.

The protein resides in the secreted. It carries out the reaction Hydrolysis of (1-&gt;4)-beta-linkages between N-acetylmuramic acid and N-acetyl-D-glucosamine residues in a peptidoglycan and between N-acetyl-D-glucosamine residues in chitodextrins.. Lysozymes have primarily a bacteriolytic function; those in tissues and body fluids are associated with the monocyte-macrophage system and enhance the activity of immunoagents. The protein is Lysozyme C-1 of Anas platyrhynchos (Mallard).